Here is a 575-residue protein sequence, read N- to C-terminus: uncharacterized protein (575 aa).

Transmembrane regions (helical) follow at residues 16–36 (FFLD…FPLI), 50–70 (WGLI…SSAL), 132–152 (PEDL…MLFI), 154–174 (WQLA…ALYF), 243–263 (ISYM…TWFV), and 264–284 (IRGS…NVLF). The region spanning 16-299 (FFLDFFSAIA…INAIIEMYPR (284 aa)) is the ABC transmembrane type-1 domain. In terms of domain architecture, ABC transporter spans 333 to 567 (IRYKHVSFGY…GGLYSRLHQA (235 aa)). 366 to 373 (GPSGAGKS) is an ATP binding site.

This sequence belongs to the ABC transporter superfamily.

The protein localises to the cell membrane. The protein resides in the membrane raft. This is an uncharacterized protein from Bacillus subtilis (strain 168).